The primary structure comprises 380 residues: Erythronate-4-phosphate dehydrogenase (380 aa).

2 residues coordinate substrate: Ser-45 and Thr-66. Residues 126–127, Asp-146, Thr-174, 205–207, and Asp-231 each bind NAD(+); these read QV and ASR. Arg-207 is a catalytic residue. Glu-236 is an active-site residue. His-253 acts as the Proton donor in catalysis. Residue Gly-256 participates in NAD(+) binding. Tyr-257 provides a ligand contact to substrate.

Belongs to the D-isomer specific 2-hydroxyacid dehydrogenase family. PdxB subfamily. In terms of assembly, homodimer.

It is found in the cytoplasm. The catalysed reaction is 4-phospho-D-erythronate + NAD(+) = (R)-3-hydroxy-2-oxo-4-phosphooxybutanoate + NADH + H(+). It functions in the pathway cofactor biosynthesis; pyridoxine 5'-phosphate biosynthesis; pyridoxine 5'-phosphate from D-erythrose 4-phosphate: step 2/5. Its function is as follows. Catalyzes the oxidation of erythronate-4-phosphate to 3-hydroxy-2-oxo-4-phosphonooxybutanoate. This chain is Erythronate-4-phosphate dehydrogenase, found in Pseudomonas syringae pv. tomato (strain ATCC BAA-871 / DC3000).